The following is a 183-amino-acid chain: Streptavidin-V1 (183 aa).

Positions 1-24 are cleaved as a signal peptide; sequence MRKIVVAAIAVSLTTVSITASASA. The Avidin-like domain maps to 37–159; the sequence is AEAGITGTWY…GHDTFTKVKP (123 aa). Biotin is bound by residues tyrosine 67 and tyrosine 78. Positions 83–85 match the Cell attachment site; atypical motif; that stretch reads RYD. Biotin-binding residues include tryptophan 116, tryptophan 132, and tryptophan 144.

This sequence belongs to the avidin/streptavidin family. Homotetramer.

It is found in the secreted. In terms of biological role, the biological function of streptavidin is not known. Forms a strong non-covalent specific complex with biotin (one molecule of biotin per subunit of streptavidin). The sequence is that of Streptavidin-V1 from Streptomyces violaceus (Streptomyces venezuelae).